The chain runs to 375 residues: Leucoanthocyanidin dioxygenase 1 (375 aa).

The Fe2OG dioxygenase domain maps to 218-317; the sequence is LLLQLKINYY…RLSWVVFCEP (100 aa). Positions 242, 244, and 298 each coordinate Fe cation. A 2-oxoglutarate-binding site is contributed by Arg308.

This sequence belongs to the iron/ascorbate-dependent oxidoreductase family. Requires L-ascorbate as cofactor. Fe(2+) is required as a cofactor.

It carries out the reaction a (2R,3S,4S)-leucoanthocyanidin + 2-oxoglutarate + O2 = a 4-H-anthocyanidin with a 3-hydroxy group + succinate + CO2 + 2 H2O. The protein operates within pigment biosynthesis; anthocyanin biosynthesis. In terms of biological role, involved in anthocyanin and protoanthocyanidin biosynthesis by catalyzing the oxidation of leucoanthocyanidins into anthocyanidins. Is able to synthesize anthocyanin pigments from leucoanthocyanidins in aleurone tissue. Converts dihydroquercetin to quercetin in vitro. This is Leucoanthocyanidin dioxygenase 1 from Oryza sativa subsp. indica (Rice).